We begin with the raw amino-acid sequence, 465 residues long: Cysteine--tRNA ligase (465 aa).

Cysteine 27 contacts Zn(2+). The 'HIGH' region motif lies at 29 to 39 (PTVYDDAHLGH). Positions 207, 237, and 241 each coordinate Zn(2+). The 'KMSKS' region motif lies at 269-273 (KMSKS). Residue lysine 272 coordinates ATP.

The protein belongs to the class-I aminoacyl-tRNA synthetase family. As to quaternary structure, monomer. Zn(2+) serves as cofactor.

It localises to the cytoplasm. The enzyme catalyses tRNA(Cys) + L-cysteine + ATP = L-cysteinyl-tRNA(Cys) + AMP + diphosphate. This Helicobacter pylori (strain P12) protein is Cysteine--tRNA ligase.